A 31-amino-acid chain; its full sequence is Photosystem II reaction center protein T (31 aa).

The helical transmembrane segment at 3 to 23 (ALVYVFLLTGTLMVIFFAIFF) threads the bilayer.

This sequence belongs to the PsbT family. As to quaternary structure, PSII is composed of 1 copy each of membrane proteins PsbA, PsbB, PsbC, PsbD, PsbE, PsbF, PsbH, PsbI, PsbJ, PsbK, PsbL, PsbM, PsbT, PsbX, PsbY, PsbZ, Psb30/Ycf12, at least 3 peripheral proteins of the oxygen-evolving complex and a large number of cofactors. It forms dimeric complexes.

It localises to the plastid. Its subcellular location is the chloroplast thylakoid membrane. In terms of biological role, found at the monomer-monomer interface of the photosystem II (PS II) dimer, plays a role in assembly and dimerization of PSII. PSII is a light-driven water plastoquinone oxidoreductase, using light energy to abstract electrons from H(2)O, generating a proton gradient subsequently used for ATP formation. This chain is Photosystem II reaction center protein T, found in Pyropia yezoensis (Susabi-nori).